The chain runs to 500 residues: Maintenance of mitochondrial morphology protein 1 (500 aa).

Over 1-42 the chain is Lumenal; it reads MATQVATPLSPSYTSELIIVCHHVLQHSPTPLTPHSLSFTQG. Residues 43-63 form a helical membrane-spanning segment; the sequence is FLLGQLSIALLIFFFIKFFIF. Residues 64-500 are Cytoplasmic-facing; it reads GEPPSADDRS…PGALAPGTFR (437 aa). In terms of domain architecture, SMP-LTD spans 141-375; the sequence is QPESLDWFNV…EPRFQQIVLP (235 aa). Low complexity-rich tracts occupy residues 283-294 and 302-316; these read SSSPPSTSTTTP and NSTT…HRPT. Disordered regions lie at residues 283 to 316 and 406 to 500; these read SSSP…HRPT and EEEE…GTFR. Positions 406 to 415 are enriched in acidic residues; the sequence is EEEEEEEEDG. Residues 438–471 are compositionally biased toward basic and acidic residues; the sequence is EGAKLREAEIRAGVRKQERPGMSRAQTSREEGVR.

The protein belongs to the MMM1 family. Homodimer. Component of the ER-mitochondria encounter structure (ERMES) or MDM complex, composed of MMM1, MDM10, MDM12 and MDM34. An MMM1 homodimer associates with one molecule of MDM12 on each side in a pairwise head-to-tail manner, and the SMP-LTD domains of MMM1 and MDM12 generate a continuous hydrophobic tunnel for phospholipid trafficking.

Its subcellular location is the endoplasmic reticulum membrane. Functionally, component of the ERMES/MDM complex, which serves as a molecular tether to connect the endoplasmic reticulum (ER) and mitochondria. Components of this complex are involved in the control of mitochondrial shape and protein biogenesis, and function in nonvesicular lipid trafficking between the ER and mitochondria. The MDM12-MMM1 subcomplex functions in the major beta-barrel assembly pathway that is responsible for biogenesis of all outer membrane beta-barrel proteins, and acts in a late step after the SAM complex. The MDM10-MDM12-MMM1 subcomplex further acts in the TOM40-specific pathway after the action of the MDM12-MMM1 complex. Essential for establishing and maintaining the structure of mitochondria and maintenance of mtDNA nucleoids. In Phaeosphaeria nodorum (strain SN15 / ATCC MYA-4574 / FGSC 10173) (Glume blotch fungus), this protein is Maintenance of mitochondrial morphology protein 1.